The primary structure comprises 284 residues: MNKANDYTLGVEMIPLSMGEFFEEIDHIRDAIRQIEDNVGRIEMLHQQSLQEIDEANIAATTRHLEGYTSDTRRLQTSVQLAIRSLESQNMQLPPDNDTATRKTQTEAVKKKFMDQIRHFLQIEKTYRAQYEQRMRRQLEIANPRATEDDFQTAINEENGGQVFAQALLRSNRSGEARTALREVQERHADIKRIERTIAELAQLFQDMATMVQEQEPMVDKIVTDAVNVRTNMGEGTQHMDRAIKSARAARKKKWICFGICVVIICVIVAVLCGVLIPVLGNRH.

Positions 23–57 (EEIDHIRDAIRQIEDNVGRIEMLHQQSLQEIDEAN) form a coiled coil. The t-SNARE coiled-coil homology domain maps to 181–243 (LREVQERHAD…GEGTQHMDRA (63 aa)). A helical; Anchor for type IV membrane protein transmembrane segment spans residues 260–280 (ICVVIICVIVAVLCGVLIPVL).

This sequence belongs to the syntaxin family.

Its subcellular location is the cell membrane. It localises to the prospore membrane. The chain is Syntaxin-like protein psy1 (psy1) from Schizosaccharomyces pombe (strain 972 / ATCC 24843) (Fission yeast).